The sequence spans 197 residues: Elongation factor Ts (197 aa).

The involved in Mg(2+) ion dislocation from EF-Tu stretch occupies residues 81–84 (TDFV).

This sequence belongs to the EF-Ts family.

It is found in the cytoplasm. Functionally, associates with the EF-Tu.GDP complex and induces the exchange of GDP to GTP. It remains bound to the aminoacyl-tRNA.EF-Tu.GTP complex up to the GTP hydrolysis stage on the ribosome. The chain is Elongation factor Ts from Thermotoga neapolitana (strain ATCC 49049 / DSM 4359 / NBRC 107923 / NS-E).